The chain runs to 138 residues: Single-stranded DNA-binding protein 4 (138 aa).

The 104-residue stretch at 1 to 104 (MINNVVLIGR…VVADSFQILE (104 aa)) folds into the SSB domain. Residues 107–138 (DNSTNQASMDDQLPPSFGNSQPMDISDDDLPF) form a disordered region. Residues 133-138 (DDDLPF) carry the Important for interaction with partner proteins motif.

As to quaternary structure, homotetramer.

Plays an important role in DNA replication, recombination and repair. Binds to ssDNA and to an array of partner proteins to recruit them to their sites of action during DNA metabolism. This is Single-stranded DNA-binding protein 4 (ssb4) from Streptococcus agalactiae serotype V (strain ATCC BAA-611 / 2603 V/R).